Consider the following 126-residue polypeptide: Large ribosomal subunit protein eL32 (126 aa).

It belongs to the eukaryotic ribosomal protein eL32 family.

The chain is Large ribosomal subunit protein eL32 from Thermococcus onnurineus (strain NA1).